The chain runs to 73 residues: Putative antimicrobial peptide clone 4 (73 aa).

The N-terminal stretch at 1-22 is a signal peptide; it reads MQMKYLIPIFFLVLIVADHCHA. The propeptide occupies 45–73; the sequence is DITSQIEQYRNLQKREAELEDILANLPVY.

The protein belongs to the non-disulfide-bridged peptide (NDBP) superfamily. Short antimicrobial peptide (group 4) family. As to expression, expressed by the venom gland.

It localises to the secreted. Functionally, antimicrobial peptide. Has a high antibacterial activity against the Gram-positive bacterium S.aureus (MIC=5-17.30 uM), the methicillin-resistant S.aureus (MRSA) (MIC=17.30 uM), and E.faecalis (MIC=69.23 uM). Has antifungal activity against Candida spp. and one Cryptococcus neoformans strains with MICs values ranging from 6.25 to 100 uM. Also shows an inhibitory activity on C.albicans biofilms at high concentrations. Has a moderate hemolytic potency (18% at 20 uM). Also inhibits the growth of the five cancer cell lines tested. In the model of polymicrobial sepsis, it exhibits an antibiotic effect, reducing the levels of microorganisms in the infectious focus and the inflammatory responses in the lung and cecum of septic animals. This Tityus costatus (Brazilian scorpion) protein is Putative antimicrobial peptide clone 4.